The following is a 635-amino-acid chain: PTS system fructose-specific EIIABC component (635 aa).

Residues 5–149 (ELLTKHTIKL…DAIIDIINQH (145 aa)) enclose the PTS EIIA type-2 domain. Residue His67 is the Tele-phosphohistidine intermediate; for EIIA activity of the active site. A Phosphohistidine; by HPr modification is found at His67. The interval 149–168 (HDKDDDEEEEEEEAAPAPAG) is disordered. The span at 152-162 (DDDEEEEEEEA) shows a compositional bias: acidic residues. The region spanning 172–267 (ILAVTACPTG…PQELIEKAMN (96 aa)) is the PTS EIIB type-2 domain. Cys178 (phosphocysteine intermediate; for EIIB activity) is an active-site residue. Residue Cys178 is modified to Phosphocysteine; by EIIA. The tract at residues 273–293 (YQGSGGGSAASNDDEEAKGKS) is disordered. Residues 301 to 635 (FYKHLMSGVS…GIVKKPVTEK (335 aa)) enclose the PTS EIIC type-2 domain. The next 9 membrane-spanning stretches (helical) occupy residues 312–332 (MLPFVVGGGILVAISFFWGIH), 350–370 (FIGGDNALKLIVAVLAGFIAM), 392–412 (NAGFLGGLIAGFLAGYVVILL), 428–448 (PVLIYPLFGIFITGVLMQFVV), 470–490 (NLVLMGIILGGMMAIDMGGPL), 511–531 (AAIMAGGMVPPLGIALATTIF), 544–564 (ITCYFMGAAFVTEGAIPFAAA), 569–589 (VIPAAVVGAAVAGGLTEFFRV), and 608–628 (MLYLLSIVIGAVVMAIILGIV).

The protein localises to the cell membrane. The catalysed reaction is D-fructose(out) + N(pros)-phospho-L-histidyl-[protein] = D-fructose 1-phosphate(in) + L-histidyl-[protein]. The phosphoenolpyruvate-dependent sugar phosphotransferase system (sugar PTS), a major carbohydrate active transport system, catalyzes the phosphorylation of incoming sugar substrates concomitantly with their translocation across the cell membrane. This system is involved in fructose transport. This is PTS system fructose-specific EIIABC component (fruA) from Bacillus subtilis (strain 168).